Reading from the N-terminus, the 108-residue chain is MNDSQYHQLIDDLLINLEEMLDDVEADIDYESASSILTLIFVNGSKIIINKQPPLHQLWVATKFNGHHFNYQDGLWIDERTGVEFWQFMNDAASKQAEVPVSFPRPTE.

Belongs to the frataxin family.

Its function is as follows. Involved in iron-sulfur (Fe-S) cluster assembly. May act as a regulator of Fe-S biogenesis. The chain is Iron-sulfur cluster assembly protein CyaY from Pseudoalteromonas atlantica (strain T6c / ATCC BAA-1087).